The following is a 356-amino-acid chain: Peptide chain release factor 1 (356 aa).

Glutamine 233 is subject to N5-methylglutamine.

Belongs to the prokaryotic/mitochondrial release factor family. Methylated by PrmC. Methylation increases the termination efficiency of RF1.

The protein localises to the cytoplasm. Its function is as follows. Peptide chain release factor 1 directs the termination of translation in response to the peptide chain termination codons UAG and UAA. This chain is Peptide chain release factor 1, found in Endomicrobium trichonymphae.